An 87-amino-acid chain; its full sequence is Small ribosomal subunit protein bS21m (87 aa).

Belongs to the bacterial ribosomal protein bS21 family. As to quaternary structure, component of the mitochondrial ribosome small subunit (28S) which comprises a 12S rRNA and about 30 distinct proteins.

The protein resides in the mitochondrion. In Mus musculus (Mouse), this protein is Small ribosomal subunit protein bS21m (Mrps21).